A 61-amino-acid polypeptide reads, in one-letter code: Short neurotoxin 1 (61 aa).

Over residues 1–16 the composition is skewed to polar residues; it reads MECHNQQSSQPPTTKT. Residues 1 to 20 form a disordered region; it reads MECHNQQSSQPPTTKTCPGE. 4 disulfide bridges follow: Cys-3–Cys-23, Cys-17–Cys-40, Cys-42–Cys-53, and Cys-54–Cys-59.

It belongs to the three-finger toxin family. Short-chain subfamily. Type I alpha-neurotoxin sub-subfamily. As to expression, expressed by the venom gland.

Its subcellular location is the secreted. Functionally, binds to muscle nicotinic acetylcholine receptor (nAChR) and inhibit acetylcholine from binding to the receptor, thereby impairing neuromuscular transmission. The chain is Short neurotoxin 1 from Naja melanoleuca (Forest cobra).